The chain runs to 165 residues: Endoribonuclease YbeY (165 aa).

Zn(2+) is bound by residues His-126, His-130, and His-136.

It belongs to the endoribonuclease YbeY family. The cofactor is Zn(2+).

Its subcellular location is the cytoplasm. Functionally, single strand-specific metallo-endoribonuclease involved in late-stage 70S ribosome quality control and in maturation of the 3' terminus of the 16S rRNA. The protein is Endoribonuclease YbeY of Ruegeria pomeroyi (strain ATCC 700808 / DSM 15171 / DSS-3) (Silicibacter pomeroyi).